The sequence spans 229 residues: Endo-1,4-beta-xylanase 1 (229 aa).

A signal peptide spans Met1–Ala19. Positions Met20 to Arg51 are excised as a propeptide. Asn31 is a glycosylation site (N-linked (GlcNAc...) asparagine). In terms of domain architecture, GH11 spans Leu42 to Ser228. Tyr117 lines the substrate pocket. Glu126 acts as the Nucleophile in catalysis. The substrate site is built by Tyr128, Arg160, Pro164, Gln174, and Tyr209. The active-site Proton donor is Glu215.

This sequence belongs to the glycosyl hydrolase 11 (cellulase G) family.

It localises to the secreted. It carries out the reaction Endohydrolysis of (1-&gt;4)-beta-D-xylosidic linkages in xylans.. Its pathway is glycan degradation; xylan degradation. Functionally, glycoside hydrolase involved in the hydrolysis of xylan, a major plant cell wall hemicellulose made up of 1,4-beta-linked D-xylopyranose residues. Catalyzes the endohydrolysis of the main-chain 1,4-beta-glycosidic bonds connecting the xylose subunits yielding various xylooligosaccharides and xylose. The polypeptide is Endo-1,4-beta-xylanase 1 (Hypocrea jecorina (strain QM6a) (Trichoderma reesei)).